The chain runs to 437 residues: Serine hydroxymethyltransferase (437 aa).

Residues Leu130 and 134–136 each bind (6S)-5,6,7,8-tetrahydrofolate; that span reads GHL. Lys239 bears the N6-(pyridoxal phosphate)lysine mark. Residue 363-365 coordinates (6S)-5,6,7,8-tetrahydrofolate; the sequence is TPF.

The protein belongs to the SHMT family. As to quaternary structure, homodimer. The cofactor is pyridoxal 5'-phosphate.

Its subcellular location is the cytoplasm. The catalysed reaction is (6R)-5,10-methylene-5,6,7,8-tetrahydrofolate + glycine + H2O = (6S)-5,6,7,8-tetrahydrofolate + L-serine. It functions in the pathway one-carbon metabolism; tetrahydrofolate interconversion. The protein operates within amino-acid biosynthesis; glycine biosynthesis; glycine from L-serine: step 1/1. Its function is as follows. Catalyzes the reversible interconversion of serine and glycine with tetrahydrofolate (THF) serving as the one-carbon carrier. This reaction serves as the major source of one-carbon groups required for the biosynthesis of purines, thymidylate, methionine, and other important biomolecules. Also exhibits THF-independent aldolase activity toward beta-hydroxyamino acids, producing glycine and aldehydes, via a retro-aldol mechanism. The polypeptide is Serine hydroxymethyltransferase (Bartonella henselae (strain ATCC 49882 / DSM 28221 / CCUG 30454 / Houston 1) (Rochalimaea henselae)).